Reading from the N-terminus, the 796-residue chain is ER degradation-enhancing alpha-mannosidase-like protein 1 (796 aa).

The signal sequence occupies residues 1 to 20 (MVCCLWVLLALLLHLDHVAC). Residue Asn86 is glycosylated (N-linked (GlcNAc...) asparagine). Glu372 (proton donor) is an active-site residue. Thr495 is a binding site for Ca(2+). 3 N-linked (GlcNAc...) asparagine glycosylation sites follow: Asn517, Asn672, and Asn762.

Belongs to the glycosyl hydrolase 47 family. As to quaternary structure, interacts with PDI1. Ca(2+) serves as cofactor.

It is found in the endoplasmic reticulum lumen. The catalysed reaction is Hydrolysis of terminal, non-reducing alpha-D-mannose residues in alpha-D-mannosides.. It functions in the pathway protein modification; protein glycosylation. Functionally, alpha-1,2-specific exomannosidase involved in endoplasmic reticulum-associated degradation (ERAD). Delivers misfolded glycoproteins to proteasomes. Forms a complex with PDI1 to process unfolded protein-bound Man8GlcNAc2 oligosaccharides to Man7GlcNAc2, promoting degradation in unfolded protein response. This Saccharomyces cerevisiae (strain ATCC 204508 / S288c) (Baker's yeast) protein is ER degradation-enhancing alpha-mannosidase-like protein 1 (MNL1).